The following is a 376-amino-acid chain: MKKELKILIIANIALLISIIHYTFDLLTLCIDDTSKDALTDEQLNPPNGFNSTFYESPPQLIPKIIHQTYKTNDIPEQWVKGRQKCIDLHPDYTYILWTDEMSDTFIKQEYPWFLDTFRSYEYPIERADAIRYFILSHYGGIYIDLDDGCERRLDPLLKVPAFLRKTSPTGVSNDVMGSVPRHPFFLKVIKSLKHYKKNWYIPYMTIMGSTGPLFISVVWKQYKRWSNTAENGAVRILQPADYKMHNNSFFSISKGSSWHTGDANFMKTLENHILSCVVTGFIFGFFILYGEFTFYTWLCSGPFNNKRYYIQWLSDKFKLHKWKLTSSYKNKEKRRNPTRHEYNSRGKRLRKDSNIPYDSVFLDIEKNHAKFTDLT.

Helical transmembrane passes span 7-27 (ILII…FDLL) and 274-294 (ILSC…GEFT). The tract at residues 331 to 351 (NKEKRRNPTRHEYNSRGKRLR) is disordered. S354 is subject to Phosphoserine.

It belongs to the glycosyltransferase 32 family. In terms of assembly, heterodimer of CSH1 and CSG2.

The protein localises to the vacuole membrane. The catalysed reaction is a 1D-myo-inositol-1-phospho-N-[(R)-2-hydroxy-very-long-chain fatty acyl]-(R)-4-hydroxysphingoid base + GDP-alpha-D-mannose = an alpha-D-mannosyl-(1&lt;-&gt;6)-1D-myo-inositol-1-phospho-N-[(R)-2-hydroxy-very-long-chain fatty acyl]-(R)-4-hydroxysphingoid base + GDP + H(+). Functionally, involved in the synthesis of mannosyl phosphorylinositol ceramide. Catalyzes the addition of mannosyl to phosphorylinositol ceramide. The sequence is that of Mannosyl phosphorylinositol ceramide synthase CSH1 from Saccharomyces cerevisiae (strain ATCC 204508 / S288c) (Baker's yeast).